We begin with the raw amino-acid sequence, 144 residues long: uncharacterized protein (144 aa).

Residues L25–V47 form a helical membrane-spanning segment.

The protein resides in the membrane. This is an uncharacterized protein from Treponema pallidum (strain Nichols).